Consider the following 530-residue polypeptide: Sugar transport protein MST6 (530 aa).

At 1-18 (MAGGVVVNNGGGKDYPGK) the chain is on the cytoplasmic side. Residues 19-39 (LTMFVLFACIVAATGGLIFGY) traverse the membrane as a helical segment. Residues 40 to 81 (DIGISGGVTSMNPFLIKFFPSVYRKEQAAEKNQSNQYCKFDS) lie on the Extracellular side of the membrane. The helical transmembrane segment at 82–102 (PLLTMFTSSLYLAALVASFFA) threads the bilayer. The Cytoplasmic segment spans residues 103–119 (STVTRVAGRKWSMFGGG). Residues 120–140 (VTFLVGAALNGAAKNVLMLIL) traverse the membrane as a helical segment. The Extracellular segment spans residues 141–142 (GR). The chain crosses the membrane as a helical span at residues 143 to 163 (VLLGVGVGFANQSVPLYLSEM). Residues 164–169 (APARLR) lie on the Cytoplasmic side of the membrane. The helical transmembrane segment at 170–190 (GMLNIGFQLMITIGILCANLI) threads the bilayer. Residues 191 to 204 (NYGTAKIKGGWGWR) lie on the Extracellular side of the membrane. Residues 205-225 (VSLALAAVPAAIIAVGALFLP) traverse the membrane as a helical segment. Residues 226–291 (DTPNSLIDRG…YRPQLTMAIA (66 aa)) lie on the Cytoplasmic side of the membrane. Residues 292–312 (IPLFQQLTGINVIMFYAPVLF) form a helical membrane-spanning segment. The Extracellular segment spans residues 313-323 (KTLGFADDASL). A helical membrane pass occupies residues 324–344 (MSAVITGLVNVFATFVSIVTV). Residues 345-359 (DRLGRRKLFLQGGTQ) lie on the Cytoplasmic side of the membrane. A helical transmembrane segment spans residues 360–380 (MLACQIVVGSLIGAKFGFSGV). The Extracellular segment spans residues 381–388 (ADIPKAYA). A helical membrane pass occupies residues 389–409 (AFVVLFICAYVAGFAWSWGPL). Topologically, residues 410–428 (GWLVPSEIFPLEIRSAGQS) are cytoplasmic. A helical transmembrane segment spans residues 429–449 (INVSVNMLFTFIIAQAFLPML). Residues 450–453 (CRFK) lie on the Extracellular side of the membrane. Residues 454–474 (FILFFFFGAWVVIMTLFVAFF) form a helical membrane-spanning segment. Residues 475-530 (LPETKNVPIEEMVLVWKSHWYWGRFIRDEDVHVGADVEMPAAGNRNGKVDPAKLAN) are Cytoplasmic-facing.

This sequence belongs to the major facilitator superfamily. Sugar transporter (TC 2.A.1.1) family. Expressed in leaf blades, leaf sheaths, anthers, ovaries and embryos. Expressed at low levels in roots and shoots.

It is found in the cell membrane. Its function is as follows. Mediates active uptake of hexoses by sugar:proton symport. Can transport glucose, fructose, mannose, galactose, xylose and ribose. This chain is Sugar transport protein MST6, found in Oryza sativa subsp. japonica (Rice).